Here is a 2298-residue protein sequence, read N- to C-terminus: Non-reducing polyketide synthase pgmA (2298 aa).

The tract at residues 8 to 333 (LFIFGDQTLD…IYNVLKQSPL (326 aa)) is N-terminal acylcarrier protein transacylase domain (SAT). The interval 336 to 361 (YLSSKPAQSRQPVSNEGAPEPGNGRQ) is disordered. Positions 340–349 (KPAQSRQPVS) are enriched in polar residues. The 439-residue stretch at 360–798 (RQKLAIIGMS…GGNSALLVED (439 aa)) folds into the Ketosynthase family 3 (KS3) domain. Active-site for beta-ketoacyl synthase activity residues include Cys532, His667, and His714. The tract at residues 901-1193 (VFAFTGQGAH…GMVKGVLGPQ (293 aa)) is acyl/malonyl transferases. Ser994 acts as the For acyl/malonyl transferase activity in catalysis. Residues 1283 to 1415 (HRVVEETHDS…CVVRFRDRGL (133 aa)) are N-terminal hotdog fold. The 307-residue stretch at 1283–1589 (HRVVEETHDS…IQGVPRRVLK (307 aa)) folds into the PKS/mFAS DH domain. Residues 1294–1586 (KTRIVIEADI…QISIQGVPRR (293 aa)) form a product template (PT) domainn region. The Proton acceptor; for dehydratase activity role is filled by His1315. Residues 1438–1589 (VTGETARFNR…IQGVPRRVLK (152 aa)) form a C-terminal hotdog fold region. Asp1502 serves as the catalytic Proton donor; for dehydratase activity. The tract at residues 1619–1642 (YPVANGHAQATPTSGPVNGEPRPS) is disordered. A Carrier 1 domain is found at 1641 to 1716 (PSRFPRALEI…SLRALLSEPE (76 aa)). Ser1675 is subject to O-(pantetheine 4'-phosphoryl)serine. The segment at 1716-1762 (ERSTNGMPAASAKDTSRFDEIPPMNGHKTNGHVMNGHSNGSSNGLPD) is disordered. Polar residues predominate over residues 1751-1760 (GHSNGSSNGL). The 76-residue stretch at 1765–1840 (KVDFQRVLQI…DLKRYLFPQD (76 aa)) folds into the Carrier 2 domain. Ser1799 carries the post-translational modification O-(pantetheine 4'-phosphoryl)serine. Residues 1927–2178 (VTGASGSLGG…YWTPVEEVAG (252 aa)) form a reductase (R) domain region.

Its pathway is pigment biosynthesis. The protein operates within secondary metabolite biosynthesis. Non-reducing polyketide synthase; part of the gene cluster that mediates the biosynthesis of pleosporalin A, ascomycone A, as well as a third cryptic naphthoquinone derived pigment, all responsible for the coloration of conidia. The non-reducing polyketide synthase pgmA is responsible for the condensation of seven acetyl-CoA units to produce the cyclized heptaketide 3-acetonyl-1,6,8-trihydroxy-2-naphthaldehyde. The pathway begins with the biosynthesis of the cyclized heptaketide 3-acetonyl-1,6,8-trihydroxy-2-naphthaldehyde by the NR-PKS pgmA. The C-6 hydroxyl group is further methylated by the O-methyltransferase pgmB to yield fusarubinaldehyde which is in turn oxidized by the cytochrome P450 monooxygenase pgmC at C-9. The C-1 hydroxyl group is then methylated spontaneously. Although pgmE, pgmD and pgmH are essential for the production of pleosporalin A, it is not the case for the 2 other final products and it remains difficult to assign a specific function to each enzyme. PgmF and pgmG seem not to be involved in pigment biosynthesis although they were regulated by the cluster-specific transcription factor pgmR. This is Non-reducing polyketide synthase pgmA from Aspergillus terreus (strain NIH 2624 / FGSC A1156).